A 348-amino-acid polypeptide reads, in one-letter code: uncharacterized protein (348 aa).

The N-terminal stretch at M1 to K26 is a signal peptide.

This is an uncharacterized protein from Bacillus subtilis (strain 168).